A 189-amino-acid polypeptide reads, in one-letter code: Probable RNA 2'-phosphotransferase (189 aa).

Belongs to the KptA/TPT1 family.

In terms of biological role, removes the 2'-phosphate from RNA via an intermediate in which the phosphate is ADP-ribosylated by NAD followed by a presumed transesterification to release the RNA and generate ADP-ribose 1''-2''-cyclic phosphate (APPR&gt;P). May function as an ADP-ribosylase. The sequence is that of Probable RNA 2'-phosphotransferase from Streptomyces griseus subsp. griseus (strain JCM 4626 / CBS 651.72 / NBRC 13350 / KCC S-0626 / ISP 5235).